The primary structure comprises 254 residues: Proteasome activator complex subunit 3 (254 aa).

A2 carries the post-translational modification N-acetylalanine. 2 positions are modified to phosphoserine: S17 and S24. K195 is subject to N6-acetyllysine; by P300/CBP. At S247 the chain carries Phosphoserine; by CHEK2.

The protein belongs to the PA28 family. As to quaternary structure, homoheptamer; the stability of the heptamer is essential for the specific activation of the trypsine-like subunit and inhibition of the chymotrypsin-like and postglutamyl-preferring (PGPH) subunits of the proteasome. Interacts with p53/TP53, MDM2 and MAP3K3. Associates with the proteasome. Interacts with CCAR2. Interacts with PSME3IP1 (via C-terminus); the interaction is direct and promotes the association of PSME3 with the 20S proteasome. Interacts with COIL; the interaction is inhibited by PSME3IP1. In terms of processing, phosphorylated by MAP3K3. Phosphorylation at Ser-247 promotes its association with CCAR2. Acetylation at the major site Lys-195 is important for oligomerization and ability to degrade its target substrates. Deacetylated by SIRT1.

Its subcellular location is the nucleus. It localises to the cytoplasm. Subunit of the 11S REG-gamma (also called PA28-gamma) proteasome regulator, a doughnut-shaped homoheptamer which associates with the proteasome. 11S REG-gamma activates the trypsin-like catalytic subunit of the proteasome but inhibits the chymotrypsin-like and postglutamyl-preferring (PGPH) subunits. Facilitates the MDM2-p53/TP53 interaction which promotes ubiquitination- and MDM2-dependent proteasomal degradation of p53/TP53, limiting its accumulation and resulting in inhibited apoptosis after DNA damage. May also be involved in cell cycle regulation. Mediates CCAR2 and CHEK2-dependent SIRT1 inhibition. The sequence is that of Proteasome activator complex subunit 3 (PSME3) from Pongo abelii (Sumatran orangutan).